The chain runs to 234 residues: Gem-associated protein 8 (234 aa).

The disordered stretch occupies residues 60–116; the sequence is LAQSPAAKGGTSPKSRSKSPSASGDACRRRSRPGKPGPQRRSTEKPARFAEDNDSES. Over residues 67–83 the composition is skewed to low complexity; that stretch reads KGGTSPKSRSKSPSASG. The segment covering 100-110 has biased composition (basic and acidic residues); that stretch reads RSTEKPARFAE. The stretch at 130 to 153 forms a coiled coil; it reads ITDELRQYFAETEQHREELRRQHQ.

As to quaternary structure, part of the core SMN complex that contains SMN1, GEMIN2/SIP1, DDX20/GEMIN3, GEMIN4, GEMIN5, GEMIN6, GEMIN7, GEMIN8 and STRAP/UNRIP. Part of the SMN-Sm complex that contains SMN1, GEMIN2/SIP1, DDX20/GEMIN3, GEMIN4, GEMIN5, GEMIN6, GEMIN7, GEMIN8, STRAP/UNRIP and the Sm proteins SNRPB, SNRPD1, SNRPD2, SNRPD3, SNRPE, SNRPF and SNRPG. Interacts with GEMIN6; the interaction is direct. Interacts with GEMIN7; the interaction is direct. Interacts with SMN1; the interaction is direct. Interacts with GEMIN4; the interaction is direct.

It is found in the nucleus. The protein resides in the gem. It localises to the cytoplasm. Its function is as follows. The SMN complex catalyzes the assembly of small nuclear ribonucleoproteins (snRNPs), the building blocks of the spliceosome, and thereby plays an important role in the splicing of cellular pre-mRNAs. Most spliceosomal snRNPs contain a common set of Sm proteins SNRPB, SNRPD1, SNRPD2, SNRPD3, SNRPE, SNRPF and SNRPG that assemble in a heptameric protein ring on the Sm site of the small nuclear RNA to form the core snRNP (Sm core). In the cytosol, the Sm proteins SNRPD1, SNRPD2, SNRPE, SNRPF and SNRPG are trapped in an inactive 6S pICln-Sm complex by the chaperone CLNS1A that controls the assembly of the core snRNP. To assemble core snRNPs, the SMN complex accepts the trapped 5Sm proteins from CLNS1A forming an intermediate. Binding of snRNA inside 5Sm triggers eviction of the SMN complex, thereby allowing binding of SNRPD3 and SNRPB to complete assembly of the core snRNP. The sequence is that of Gem-associated protein 8 (GEMIN8) from Bos taurus (Bovine).